We begin with the raw amino-acid sequence, 380 residues long: Apelin receptor (380 aa).

Over 1 to 30 (MEEGGDFDNYYGADNQSECEYTDWKSSGAL) the chain is Extracellular. An N-linked (GlcNAc...) asparagine glycan is attached at Asn-15. Disulfide bonds link Cys-19-Cys-281 and Cys-102-Cys-181. Residues 31–54 (IPAIYMLVFLLGTTGNGLVLWTVF) traverse the membrane as a helical segment. The Cytoplasmic portion of the chain corresponds to 55–64 (RSSREKRRSA). The helical transmembrane segment at 65–86 (DIFIASLAVADLTFVVTLPLWA) threads the bilayer. Residues 87 to 99 (TYTYRDYDWPFGT) are Extracellular-facing. A helical membrane pass occupies residues 100 to 125 (FSCKLSSYLIFVNMYASVFCLTGLSF). Residues 126–146 (DRYLAIVRPVANARLRLRVSG) are Cytoplasmic-facing. Residues 147 to 164 (AVATAVLWVLAALLAMPV) form a helical membrane-spanning segment. Topologically, residues 165–198 (MVFRTTGDLENTTKVQCYMDYSMVATVSSDWAWE) are extracellular. N-linked (GlcNAc...) asparagine glycosylation is present at Asn-175. The chain crosses the membrane as a helical span at residues 199–223 (VGLGVSSTTVGFVVPFTIMLTCYFF). Over 224–246 (IAQTIAGHFRKERIEGLRKRRRL) the chain is Cytoplasmic. Residues 247-270 (LSIIVVLVVTFALCWMPYHLVKTL) traverse the membrane as a helical segment. At 271 to 289 (YMLGSLLHWPCDFDLFLMN) the chain is on the extracellular side. Residues 290–312 (VFPYCTCISYVNSCLNPFLYAFF) form a helical membrane-spanning segment. Over 313-380 (DPRFRQACTS…PYSQETLVVD (68 aa)) the chain is Cytoplasmic. Over residues 342 to 351 (KSASYSSGHS) the composition is skewed to low complexity. Positions 342–380 (KSASYSSGHSQGPGPNMGKGGEQMHEKSIPYSQETLVVD) are disordered. Residues 371 to 380 (PYSQETLVVD) are compositionally biased toward polar residues.

The protein belongs to the G-protein coupled receptor 1 family. As to quaternary structure, homodimer; dimerization inhibits APLNR-mediated G protein and beta-arrestin signaling pathways compared to monomeric APLNR.

It localises to the cell membrane. Its function is as follows. G protein-coupled receptor for peptide hormones apelin (APLN) and apelin receptor early endogenous ligand (APELA/ELA), that plays a role in the regulation of normal cardiovascular function and fluid homeostasis. When acting as apelin receptor, activates both G(i) protein pathway that inhibits adenylate cyclase activity, and the beta-arrestin pathway that promotes internalization of the receptor. APLNR/APJ also functions as mechanoreceptor that is activated by pathological stimuli in a G-protein-independent fashion to induce beta-arrestin signaling, hence eliciting cardiac hypertrophy. However, the presence of apelin ligand blunts cardiac hypertrophic induction from APLNR/APJ on response to pathological stimuli. Plays a key role in early development such as gastrulation, blood vessels formation and heart morphogenesis by acting as a APELA receptor. May promote angioblast migration toward the embryonic midline, i.e. the position of the future vessel formation, during vasculogenesis. Promotes sinus venosus (SV)-derived endothelial cells migration into the developing heart to promote coronary blood vessel development. Also plays a role in various processes in adults such as regulation of blood vessel formation, blood pressure, heart contractility and heart failure. In terms of biological role, (Microbial infection) Alternative coreceptor with CD4 for HIV-1 infection; may be involved in the development of AIDS dementia. In Macaca mulatta (Rhesus macaque), this protein is Apelin receptor (APLNR).